The sequence spans 120 residues: QTIATGSPPIAGTSDLSTITSAATPTFTTEQDGREQGDGLQLAHDFSQPVITVIILGVMAGIIGIILLLAYVSRRLRKRPPADVPPPASTVPSADAPPPVSEDDETSLTSVETDYPGDSQ.

A Pyrrolidone carboxylic acid modification is found at Gln-1. Residues 1 to 40 are disordered; the sequence is QTIATGSPPIAGTSDLSTITSAATPTFTTEQDGREQGDGL. O-linked (GalNAc...) threonine glycans are attached at residues Thr-2 and Thr-5. Residue Ser-7 is glycosylated (O-linked (GalNAc...) serine). Thr-13 is a glycosylation site (O-linked (GalNAc...) threonine). O-linked (GalNAc...) serine glycosylation is present at Ser-17. Residues 17-29 show a composition bias toward low complexity; the sequence is STITSAATPTFTT. 2 O-linked (GalNAc...) threonine glycosylation sites follow: Thr-18 and Thr-20. Ser-21 is a glycosylation site (O-linked (GalNAc...) serine). 2 O-linked (GalNAc...) threonine glycosylation sites follow: Thr-24 and Thr-28. Residues 50–72 traverse the membrane as a helical segment; that stretch reads VITVIILGVMAGIIGIILLLAYV. The disordered stretch occupies residues 78–120; that stretch reads KRPPADVPPPASTVPSADAPPPVSEDDETSLTSVETDYPGDSQ. Positions 82–100 are enriched in pro residues; that stretch reads ADVPPPASTVPSADAPPPV. A compositionally biased stretch (polar residues) spans 107–120; the sequence is SLTSVETDYPGDSQ. Ser-119 is modified (phosphoserine).

Belongs to the glycophorin-A family. As to quaternary structure, homodimer.

It is found in the membrane. Glycophorin A is the major intrinsic membrane sialoglycoprotein of the erythrocyte. Appears to be important for the function of SLC4A1 and is required for high activity of SLC4A1. May be involved in translocation of SLC4A1 to the plasma membrane. In Equus caballus (Horse), this protein is Glycophorin-A.